Here is a 432-residue protein sequence, read N- to C-terminus: UDP-N-acetylmuramate--L-alanine ligase (432 aa).

An ATP-binding site is contributed by 108–114; that stretch reads GAHGKTS.

This sequence belongs to the MurCDEF family.

The protein resides in the cytoplasm. The catalysed reaction is UDP-N-acetyl-alpha-D-muramate + L-alanine + ATP = UDP-N-acetyl-alpha-D-muramoyl-L-alanine + ADP + phosphate + H(+). Its pathway is cell wall biogenesis; peptidoglycan biosynthesis. Cell wall formation. In Bacillus pumilus (strain SAFR-032), this protein is UDP-N-acetylmuramate--L-alanine ligase.